The chain runs to 72 residues: NAD(P)H-quinone oxidoreductase subunit O (72 aa).

Belongs to the complex I NdhO subunit family. In terms of assembly, NDH-1 can be composed of about 15 different subunits; different subcomplexes with different compositions have been identified which probably have different functions.

It localises to the cellular thylakoid membrane. The catalysed reaction is a plastoquinone + NADH + (n+1) H(+)(in) = a plastoquinol + NAD(+) + n H(+)(out). It carries out the reaction a plastoquinone + NADPH + (n+1) H(+)(in) = a plastoquinol + NADP(+) + n H(+)(out). Functionally, NDH-1 shuttles electrons from an unknown electron donor, via FMN and iron-sulfur (Fe-S) centers, to quinones in the respiratory and/or the photosynthetic chain. The immediate electron acceptor for the enzyme in this species is believed to be plastoquinone. Couples the redox reaction to proton translocation, and thus conserves the redox energy in a proton gradient. Cyanobacterial NDH-1 also plays a role in inorganic carbon-concentration. The protein is NAD(P)H-quinone oxidoreductase subunit O of Synechococcus elongatus (strain ATCC 33912 / PCC 7942 / FACHB-805) (Anacystis nidulans R2).